The following is a 268-amino-acid chain: ClpXP adapter protein SpxH (268 aa).

The protein belongs to the SpxH family. As to quaternary structure, interacts with Spx.

It localises to the cytoplasm. In terms of biological role, adapter protein required for efficient degradation of Spx by ClpXP under non-stress conditions. Interaction with Spx stabilizes Spx and exposes the C-terminus of Spx for recognition and proteolysis by ClpXP. This Staphylococcus aureus (strain MRSA252) protein is ClpXP adapter protein SpxH.